The chain runs to 116 residues: Ly-6/neurotoxin-like protein 1 (116 aa).

The first 20 residues, 1–20 (MTPLLTLILVVLMGLPLAQA), serve as a signal peptide directing secretion. In terms of domain architecture, UPAR/Ly6 spans 21–105 (LDCHVCAYNG…LATPATLALA (85 aa)). 5 disulfides stabilise this stretch: Cys23–Cys46, Cys26–Cys33, Cys39–Cys64, Cys68–Cys85, and Cys86–Cys91. Asn92 carries the GPI-anchor amidated asparagine lipid modification. The propeptide at 93–116 (GAGLATPATLALAPILLATLWGLL) is removed in mature form.

In terms of assembly, interacts with nAChRs containing alpha-4:beta-2 (CHRNA4:CHRNB2) and alpha-7 (CHRNA7) subunits. Interacts with CHRNA4 probably in the endoplasmic reticulum prior to nAChR pentameric assembly. Interacts with KCNA2/Potassium voltage-gated channel subfamily A member 2.

It localises to the cell membrane. The protein resides in the cell projection. The protein localises to the dendrite. Its subcellular location is the endoplasmic reticulum. Acts in different tissues through interaction to nicotinic acetylcholine receptors (nAChRs). The proposed role as modulator of nAChR activity seems to be dependent on the nAChR subtype and stoichiometry, and to involve an effect on nAChR trafficking and its cell surface expression, and on single channel properties of the nAChR inserted in the plasma membrane. Modulates functional properties of nicotinic acetylcholine receptors (nAChRs) to prevent excessive excitation, and hence neurodegeneration. Enhances desensitization by increasing both the rate and extent of desensitization of alpha-4:beta-2-containing nAChRs and slowing recovery from desensitization. Promotes large amplitude ACh-evoked currents through alpha-4:beta-2 nAChRs. Is involved in regulation of the nAChR pentameric assembly in the endoplasmic reticulum. Shifts stoichiometry from high sensitivity alpha-4(2):beta-2(3) to low sensitivity alpha-4(3):beta-2(2) nAChR. In vitro modulates alpha-3:beta-4-containing nAChRs. Reduces cell surface expression of (alpha-3:beta-4)(2):beta-4 and (alpha-3:beta-4)(2):alpha-5 nAChRs suggesting an interaction with nAChR alpha-3(-):(+)beta-4 subunit interfaces and an allosteric mode. Corresponding single channel effects characterized by decreased unitary conductance, altered burst proportions and enhanced desensitization/inactivation seem to depend on nAChR alpha:alpha subunit interfaces and are greater in (alpha-3:beta-2)(2):alpha-3 when compared to (alpha-3:beta-2)(2):alpha-5 nAChRs. Prevents plasticity in the primary visual cortex late in life. This is Ly-6/neurotoxin-like protein 1 from Pan troglodytes (Chimpanzee).